The chain runs to 355 residues: S-adenosylmethionine:tRNA ribosyltransferase-isomerase (355 aa).

The protein belongs to the QueA family. In terms of assembly, monomer.

It localises to the cytoplasm. It catalyses the reaction 7-aminomethyl-7-carbaguanosine(34) in tRNA + S-adenosyl-L-methionine = epoxyqueuosine(34) in tRNA + adenine + L-methionine + 2 H(+). Its pathway is tRNA modification; tRNA-queuosine biosynthesis. Its function is as follows. Transfers and isomerizes the ribose moiety from AdoMet to the 7-aminomethyl group of 7-deazaguanine (preQ1-tRNA) to give epoxyqueuosine (oQ-tRNA). This Gluconacetobacter diazotrophicus (strain ATCC 49037 / DSM 5601 / CCUG 37298 / CIP 103539 / LMG 7603 / PAl5) protein is S-adenosylmethionine:tRNA ribosyltransferase-isomerase.